We begin with the raw amino-acid sequence, 587 residues long: Kelch-like ECH-associated protein 1B (587 aa).

One can recognise a BTB domain in the interval 44-117; sequence CDVTLRVRYC…AYTASISVGE (74 aa). Residues 153–253 form the BACK domain; it reads IGIASFAEQI…LTPHFLQRQL (101 aa). Kelch repeat units lie at residues 292-337, 338-388, 389-435, 436-482, 484-529, and 530-576; these read LIYT…VISG, LLYA…VIDG, MIYA…VINR, LLYA…ALGN, IYVM…THHG, and RIYV…VTME.

Belongs to the KEAP1 family. Homodimer and heterodimer; heterodimerizes with keap1a. Component of the BCR(KEAP1) E3 ubiquitin ligase complex, at least composed of 2 molecules of cul3, 2 molecules of keap1 (keap1a and/or keap1b), and rbx1. Interacts with nfe2l2/nrf2; the interaction is direct. Post-translationally, non-enzymatic covalent modifications of reactive cysteines by electrophile metabolites inactivate the BCR(KEAP1) complex. As to expression, widely expressed.

It localises to the cytoplasm. The protein localises to the nucleus. It participates in protein modification; protein ubiquitination. With respect to regulation, ubiquitin ligase activity of the BCR(KEAP1) complex is inhibited by oxidative stress and electrophile metabolites such as sulforaphane. Electrophile metabolites react with reactive cysteine residues in keap1 and trigger non-enzymatic covalent modifications of these cysteine residues, leading to inactivate the ubiquitin ligase activity of the BCR(KEAP1) complex. Substrate-specific adapter of a BCR (BTB-CUL3-RBX1) E3 ubiquitin ligase complex that regulates the response to oxidative stress by targeting nfe2l2/nrf2 for ubiquitination. Keap1 acts as a key sensor of oxidative and electrophilic stress: in normal conditions, the BCR(KEAP1) complex mediates ubiquitination and degradation of nfe2l2/nrf2, a transcription factor regulating expression of many cytoprotective genes. In response to oxidative stress, different electrophile metabolites trigger non-enzymatic covalent modifications of highly reactive cysteine residues in KEAP1, leading to inactivate the ubiquitin ligase activity of the BCR(KEAP1) complex, promoting nfe2l2/nrf2 nuclear accumulation and expression of phase II detoxifying enzymes. In Danio rerio (Zebrafish), this protein is Kelch-like ECH-associated protein 1B.